A 354-amino-acid chain; its full sequence is Protein RecA (354 aa).

Residue 67–74 (GPESSGKT) participates in ATP binding.

It belongs to the RecA family.

The protein resides in the cytoplasm. Functionally, can catalyze the hydrolysis of ATP in the presence of single-stranded DNA, the ATP-dependent uptake of single-stranded DNA by duplex DNA, and the ATP-dependent hybridization of homologous single-stranded DNAs. It interacts with LexA causing its activation and leading to its autocatalytic cleavage. The sequence is that of Protein RecA from Serratia marcescens.